A 227-amino-acid chain; its full sequence is Cytochrome c oxidase subunit 2 (227 aa).

Residues 1 to 22 (MAYPFQLGLQDATSPIMEELMN) are Mitochondrial intermembrane-facing. Residues 23-44 (FHDHTLMIVFLISSLVLYIISL) form a helical membrane-spanning segment. Topologically, residues 45 to 60 (MLTTKLTHTSTMDAQE) are mitochondrial matrix. Residues 61–81 (VETIWTILPAVILIMIALPSL) form a helical membrane-spanning segment. The Mitochondrial intermembrane segment spans residues 82–227 (RILYMMDEIN…YFENWSASMI (146 aa)). Residues H161, C196, E198, C200, H204, and M207 each coordinate Cu cation. Residue E198 coordinates Mg(2+). A Phosphotyrosine modification is found at Y218.

Belongs to the cytochrome c oxidase subunit 2 family. In terms of assembly, component of the cytochrome c oxidase (complex IV, CIV), a multisubunit enzyme composed of 14 subunits. The complex is composed of a catalytic core of 3 subunits MT-CO1, MT-CO2 and MT-CO3, encoded in the mitochondrial DNA, and 11 supernumerary subunits COX4I, COX5A, COX5B, COX6A, COX6B, COX6C, COX7A, COX7B, COX7C, COX8 and NDUFA4, which are encoded in the nuclear genome. The complex exists as a monomer or a dimer and forms supercomplexes (SCs) in the inner mitochondrial membrane with NADH-ubiquinone oxidoreductase (complex I, CI) and ubiquinol-cytochrome c oxidoreductase (cytochrome b-c1 complex, complex III, CIII), resulting in different assemblies (supercomplex SCI(1)III(2)IV(1) and megacomplex MCI(2)III(2)IV(2)). Found in a complex with TMEM177, COA6, COX18, COX20, SCO1 and SCO2. Interacts with TMEM177 in a COX20-dependent manner. Interacts with COX20. Interacts with COX16. Cu cation is required as a cofactor.

The protein resides in the mitochondrion inner membrane. The catalysed reaction is 4 Fe(II)-[cytochrome c] + O2 + 8 H(+)(in) = 4 Fe(III)-[cytochrome c] + 2 H2O + 4 H(+)(out). Its function is as follows. Component of the cytochrome c oxidase, the last enzyme in the mitochondrial electron transport chain which drives oxidative phosphorylation. The respiratory chain contains 3 multisubunit complexes succinate dehydrogenase (complex II, CII), ubiquinol-cytochrome c oxidoreductase (cytochrome b-c1 complex, complex III, CIII) and cytochrome c oxidase (complex IV, CIV), that cooperate to transfer electrons derived from NADH and succinate to molecular oxygen, creating an electrochemical gradient over the inner membrane that drives transmembrane transport and the ATP synthase. Cytochrome c oxidase is the component of the respiratory chain that catalyzes the reduction of oxygen to water. Electrons originating from reduced cytochrome c in the intermembrane space (IMS) are transferred via the dinuclear copper A center (CU(A)) of subunit 2 and heme A of subunit 1 to the active site in subunit 1, a binuclear center (BNC) formed by heme A3 and copper B (CU(B)). The BNC reduces molecular oxygen to 2 water molecules using 4 electrons from cytochrome c in the IMS and 4 protons from the mitochondrial matrix. The polypeptide is Cytochrome c oxidase subunit 2 (Mtco2) (Mus musculus (Mouse)).